The following is a 281-amino-acid chain: uncharacterized protein (281 aa).

This is an uncharacterized protein from Acanthamoeba polyphaga (Amoeba).